A 315-amino-acid polypeptide reads, in one-letter code: Lipoyl synthase (315 aa).

Residues C62, C67, C73, C88, C92, C95, and S302 each contribute to the [4Fe-4S] cluster site. In terms of domain architecture, Radical SAM core spans 74 to 291; it reads FNHGAATFMI…KKIALKLGFS (218 aa).

The protein belongs to the radical SAM superfamily. Lipoyl synthase family. [4Fe-4S] cluster is required as a cofactor.

The protein resides in the cytoplasm. The enzyme catalyses [[Fe-S] cluster scaffold protein carrying a second [4Fe-4S](2+) cluster] + N(6)-octanoyl-L-lysyl-[protein] + 2 oxidized [2Fe-2S]-[ferredoxin] + 2 S-adenosyl-L-methionine + 4 H(+) = [[Fe-S] cluster scaffold protein] + N(6)-[(R)-dihydrolipoyl]-L-lysyl-[protein] + 4 Fe(3+) + 2 hydrogen sulfide + 2 5'-deoxyadenosine + 2 L-methionine + 2 reduced [2Fe-2S]-[ferredoxin]. Its pathway is protein modification; protein lipoylation via endogenous pathway; protein N(6)-(lipoyl)lysine from octanoyl-[acyl-carrier-protein]: step 2/2. Its function is as follows. Catalyzes the radical-mediated insertion of two sulfur atoms into the C-6 and C-8 positions of the octanoyl moiety bound to the lipoyl domains of lipoate-dependent enzymes, thereby converting the octanoylated domains into lipoylated derivatives. The protein is Lipoyl synthase of Ruthia magnifica subsp. Calyptogena magnifica.